Here is a 673-residue protein sequence, read N- to C-terminus: DNA ligase (673 aa).

NAD(+) contacts are provided by residues 35–39 (DADYD), 84–85 (SL), and Glu115. The active-site N6-AMP-lysine intermediate is the Lys117. Residues Arg138, Glu180, Lys296, and Lys320 each contribute to the NAD(+) site. The Zn(2+) site is built by Cys415, Cys418, Cys433, and Cys438. The region spanning 595 to 673 (ERGTALAGQT…EDALKKLLGK (79 aa)) is the BRCT domain.

It belongs to the NAD-dependent DNA ligase family. LigA subfamily. It depends on Mg(2+) as a cofactor. Mn(2+) serves as cofactor.

It carries out the reaction NAD(+) + (deoxyribonucleotide)n-3'-hydroxyl + 5'-phospho-(deoxyribonucleotide)m = (deoxyribonucleotide)n+m + AMP + beta-nicotinamide D-nucleotide.. In terms of biological role, DNA ligase that catalyzes the formation of phosphodiester linkages between 5'-phosphoryl and 3'-hydroxyl groups in double-stranded DNA using NAD as a coenzyme and as the energy source for the reaction. It is essential for DNA replication and repair of damaged DNA. The polypeptide is DNA ligase (Koribacter versatilis (strain Ellin345)).